A 104-amino-acid polypeptide reads, in one-letter code: MAAKIRRDDEIIVLTGKDKGKRGKVKNVLSAGKVIVEGINLVKKHQKPVPALNQPGGIVEKEAAIQVSNIALFNAATGKADRVGFRFEDGKKVRFFKSNSETIK.

Belongs to the universal ribosomal protein uL24 family. Part of the 50S ribosomal subunit.

Functionally, one of two assembly initiator proteins, it binds directly to the 5'-end of the 23S rRNA, where it nucleates assembly of the 50S subunit. Its function is as follows. One of the proteins that surrounds the polypeptide exit tunnel on the outside of the subunit. This Serratia proteamaculans (strain 568) protein is Large ribosomal subunit protein uL24.